The primary structure comprises 88 residues: Small ribosomal subunit protein bS16c (88 aa).

Belongs to the bacterial ribosomal protein bS16 family.

The protein resides in the plastid. Its subcellular location is the chloroplast. This chain is Small ribosomal subunit protein bS16c, found in Helianthus annuus (Common sunflower).